The chain runs to 663 residues: Probable rhamnogalacturonate lyase B (663 aa).

Residues 1-19 (MRLRTSLGVASACASVASA) form the signal peptide. N-linked (GlcNAc...) asparagine glycans are attached at residues Asn27, Asn110, Asn143, Asn239, Asn285, Asn495, Asn535, Asn569, Asn597, and Asn638.

The protein belongs to the polysaccharide lyase 4 family.

The protein resides in the secreted. It carries out the reaction Endotype eliminative cleavage of L-alpha-rhamnopyranosyl-(1-&gt;4)-alpha-D-galactopyranosyluronic acid bonds of rhamnogalacturonan I domains in ramified hairy regions of pectin leaving L-rhamnopyranose at the reducing end and 4-deoxy-4,5-unsaturated D-galactopyranosyluronic acid at the non-reducing end.. Functionally, pectinolytic enzymes consist of four classes of enzymes: pectin lyase, polygalacturonase, pectin methylesterase and rhamnogalacturonase. Degrades the rhamnogalacturonan I (RG-I) backbone of pectin. The chain is Probable rhamnogalacturonate lyase B (rglB) from Aspergillus flavus (strain ATCC 200026 / FGSC A1120 / IAM 13836 / NRRL 3357 / JCM 12722 / SRRC 167).